A 234-amino-acid polypeptide reads, in one-letter code: Transcriptional regulatory protein CitB (234 aa).

Residues 5–121 (TTLIVEDEPM…RLQHTLERFA (117 aa)) enclose the Response regulatory domain. A 4-aspartylphosphate modification is found at D56. Positions 181–200 (ADSLARILGSSKTTARRYLE) form a DNA-binding region, H-T-H motif.

In vitro CitB and the CitA kinase domain form a complex, formation of which is enhanced by ATP. In terms of processing, phosphorylated by CitA.

It localises to the cytoplasm. Member of the two-component regulatory system CitA/CitB essential for expression of citrate-specific fermentation genes. Phosphorylated CitB binds to two sites in the citS-citC intergenic region where it probably activates transcription of both genes. This Klebsiella pneumoniae protein is Transcriptional regulatory protein CitB (citB).